We begin with the raw amino-acid sequence, 98 residues long: ESAT-6-like protein EsxM (98 aa).

This sequence belongs to the WXG100 family. CFP-10 subfamily.

It localises to the secreted. Alters the host macrophage cytoskeleton and enhances macrophage motility. Promotes granuloma efflux, extrapulmonary dissemination of infection and bone disease. The protein is ESAT-6-like protein EsxM of Mycobacterium marinum (strain ATCC BAA-535 / M).